The chain runs to 66 residues: UPF0337 protein BP1738 (66 aa).

This sequence belongs to the UPF0337 (CsbD) family.

The polypeptide is UPF0337 protein BP1738 (Bordetella pertussis (strain Tohama I / ATCC BAA-589 / NCTC 13251)).